Reading from the N-terminus, the 413-residue chain is Divalent metal cation transporter MntH (413 aa).

11 consecutive transmembrane segments (helical) span residues 19–39, 49–69, 94–114, 122–142, 155–175, 196–216, 240–260, 287–307, 323–343, 349–369, and 393–413; these read FALMGPAFIAAIGYIDPGNFA, GYQLLWVVVWANVMAMVIQLM, VWFYWVQAEIIAMATDLAEFI, LVFGVTLLQGAMLTGVATFLI, LVIGGLLLFVAAAYVIELFFS, AVLLAAGVLGATIMPHVIYLH, VAIAMTIAGFVNLAMMATAAA, AAALVFGLSLLAAGLSSTVVG, IPLLLRRVITMLPSFIVILAG, ILVMSQVLLSFGIALALIPLL, and LIVVVVIALNGYLLVAMALNL.

It belongs to the NRAMP family.

The protein localises to the cell inner membrane. In terms of biological role, h(+)-stimulated, divalent metal cation uptake system. This Erwinia tasmaniensis (strain DSM 17950 / CFBP 7177 / CIP 109463 / NCPPB 4357 / Et1/99) protein is Divalent metal cation transporter MntH.